We begin with the raw amino-acid sequence, 241 residues long: 7-cyano-7-deazaguanine synthase (241 aa).

9 to 19 (LSGGLDSSTVL) serves as a coordination point for ATP. Residues Cys-189, Cys-197, Cys-200, and Cys-203 each contribute to the Zn(2+) site.

This sequence belongs to the QueC family. Zn(2+) serves as cofactor.

It catalyses the reaction 7-carboxy-7-deazaguanine + NH4(+) + ATP = 7-cyano-7-deazaguanine + ADP + phosphate + H2O + H(+). Its pathway is purine metabolism; 7-cyano-7-deazaguanine biosynthesis. Functionally, catalyzes the ATP-dependent conversion of 7-carboxy-7-deazaguanine (CDG) to 7-cyano-7-deazaguanine (preQ(0)). This Thermoplasma volcanium (strain ATCC 51530 / DSM 4299 / JCM 9571 / NBRC 15438 / GSS1) protein is 7-cyano-7-deazaguanine synthase.